A 503-amino-acid chain; its full sequence is Aspartyl/glutamyl-tRNA(Asn/Gln) amidotransferase subunit B (503 aa).

It belongs to the GatB/GatE family. GatB subfamily. In terms of assembly, heterotrimer of A, B and C subunits.

It carries out the reaction L-glutamyl-tRNA(Gln) + L-glutamine + ATP + H2O = L-glutaminyl-tRNA(Gln) + L-glutamate + ADP + phosphate + H(+). The catalysed reaction is L-aspartyl-tRNA(Asn) + L-glutamine + ATP + H2O = L-asparaginyl-tRNA(Asn) + L-glutamate + ADP + phosphate + 2 H(+). Allows the formation of correctly charged Asn-tRNA(Asn) or Gln-tRNA(Gln) through the transamidation of misacylated Asp-tRNA(Asn) or Glu-tRNA(Gln) in organisms which lack either or both of asparaginyl-tRNA or glutaminyl-tRNA synthetases. The reaction takes place in the presence of glutamine and ATP through an activated phospho-Asp-tRNA(Asn) or phospho-Glu-tRNA(Gln). This is Aspartyl/glutamyl-tRNA(Asn/Gln) amidotransferase subunit B from Cereibacter sphaeroides (strain KD131 / KCTC 12085) (Rhodobacter sphaeroides).